Consider the following 576-residue polypeptide: Nuclear receptor subfamily 1 group D member 2 (576 aa).

Residues 1 to 60 (MELNAGGVIAYISSSSSASSPASCHSEGSENSFQSSSSSVPSSPNSSNCDANGNPKNADI) form a required for phosphorylation by CSNK1E and cytoplasmic localization region. The modulating stretch occupies residues 1-99 (MELNAGGVIA…HSGMTKFSGM (99 aa)). The segment covering 13 to 47 (SSSSSASSPASCHSEGSENSFQSSSSSVPSSPNSS) has biased composition (low complexity). Residues 13–90 (SSSSSASSPA…TSAPGMTKSH (78 aa)) are disordered. Position 46 is a phosphoserine; by GSK3-beta (Ser46). A DNA-binding region (nuclear receptor) is located at residues 100-176 (VLLCKVCGDV…VGMSRDAVRF (77 aa)). NR C4-type zinc fingers lie at residues 103 to 123 (CKVC…CEGC) and 140 to 164 (CLKN…FKKC). N6-acetyllysine; by KAT5 is present on residues Lys162 and Lys163. 2 disordered regions span residues 215-246 (QHDQ…SDFA) and 263-282 (LYNQ…QRGE). Composition is skewed to basic and acidic residues over residues 227–237 (LRPKSQLEQEN) and 263–272 (LYNQEHRENS). Disulfide bonds link Cys334-Cys340 and Cys371-Cys381. An NR LBD domain is found at 366-576 (RNSYLCNTGG…EELLAFKVHP (211 aa)). Heme contacts are provided by Cys381 and His565. The segment at 394 to 576 (SGHEIWEEFS…EELLAFKVHP (183 aa)) is interaction with ZNHIT1.

Belongs to the nuclear hormone receptor family. NR1 subfamily. In terms of assembly, binds DNA as a monomer or a homodimer. Interacts with NCOA5 coactivator, leading to a strong increase of transcription of target genes. Interacts (via N-terminus) with KAT5. Interacts (via C-terminus) with HDAC1. Interacts with ZNHIT1. Interacts with SIAH2. In terms of processing, deacetylated by HDAC1. Acetylation and deacetylation regulate its transcriptional regulatory activity. Post-translationally, under more reducing intracellular redox conditions, Cys-381 is in its heme-bound state, which is optimal for recruitment of the NCOR1/HDAC3 corepressor complex and repression of target genes. When subjected to oxidative stress conditions, Cys-381 undergoes oxidation to form a disulfide bridge with Cys-371, also triggering a ligand switch that results in release of bound heme and derepression of target genes. Ubiquitinated by SIAH2; leading to its proteasomal degradation. In terms of processing, phosphorylated by CSNK1E; phosphorylation enhances its cytoplasmic localization. As to expression, ubiquitous. Expressed abundantly in skeletal muscle and brown adipose tissue. Expressed during skeletal muscle myogenesis.

It localises to the nucleus. The protein resides in the cytoplasm. With respect to regulation, the heme-bound form can bind gaseous signaling molecules such as CO and nitric oxide (NO) and NO can reverse its transcriptional repressor activity. Its function is as follows. Transcriptional repressor which coordinates circadian rhythm and metabolic pathways in a heme-dependent manner. Integral component of the complex transcription machinery that governs circadian rhythmicity and forms a critical negative limb of the circadian clock by directly repressing the expression of core clock components BMAL1 and CLOCK. Also regulates genes involved in metabolic functions, including lipid metabolism and the inflammatory response. Acts as a receptor for heme which stimulates its interaction with the NCOR1/HDAC3 corepressor complex, enhancing transcriptional repression. Recognizes two classes of DNA response elements within the promoter of its target genes and can bind to DNA as either monomers or homodimers, depending on the nature of the response element. Binds as a monomer to a response element composed of the consensus half-site motif 5'-[A/G]GGTCA-3' preceded by an A/T-rich 5' sequence (RevRE), or as a homodimer to a direct repeat of the core motif spaced by two nuclegotides (RevDR-2). Acts as a potent competitive repressor of ROR alpha (RORA) function and also negatively regulates the expression of NR1D1. Regulates lipid and energy homeostasis in the skeletal muscle via repression of genes involved in lipid metabolism and myogenesis including: CD36, FABP3, FABP4, UCP3, SCD1 and MSTN. Regulates hepatic lipid metabolism via the repression of APOC3. Represses gene expression at a distance in macrophages by inhibiting the transcription of enhancer-derived RNAs (eRNAs). In addition to its activity as a repressor, can also act as a transcriptional activator. Acts as a transcriptional activator of the sterol regulatory element-binding protein 1 (SREBF1) and the inflammatory mediator interleukin-6 (IL6) in the skeletal muscle. Plays a role in the regulation of circadian sleep/wake cycle; essential for maintaining wakefulness during the dark phase or active period. Key regulator of skeletal muscle mitochondrial function; negatively regulates the skeletal muscle expression of core clock genes and genes involved in mitochondrial biogenesis, fatty acid beta-oxidation and lipid metabolism. May play a role in the circadian control of neutrophilic inflammation in the lung. The chain is Nuclear receptor subfamily 1 group D member 2 from Mus musculus (Mouse).